The chain runs to 419 residues: MSRYVFTSESVTEGHPDKICDQVSDAVLDALLAQDPSSRVACETVVNTGLCMITGEVTSKAQVDFIHLVRNVIKEIGYSGARAGGFDANSCAVLVALDQQSPDIAQGVDEADDHEGDPLDRVGAGDQGIMFGYACNETPELMPLPISLAHRLAKRLAEVRHNGSLEYLLPDGKTQVSVVYENDKPVAIDTILISTQHTAEVAGISDEQGIRERITEDLWTHVVEPATADLALKPSREATKYLVNPTGKFVVGGPQGDAGLTGRKIIVDTYGGYARHGGGAFSGKDPTKVDRSAAYAARYVAKCLVASGLAERAEVQLSYAIGVAKPVSILVESFGTGKVSNAELTELVQEHFDLRPGAIIETFGLRNLPQQRGGRFYQDTAAYGHFGRNDLKAPWEDVAAKSEELVKAEAKRIKQGATV.

H15 contributes to the ATP binding site. Position 17 (D17) interacts with Mg(2+). E43 is a K(+) binding site. L-methionine-binding residues include E56 and Q100. The flexible loop stretch occupies residues 100–110 (QSPDIAQGVDE). ATP contacts are provided by residues 171–173 (DGK), 248–249 (KF), D257, 263–264 (RK), A280, and K284. D257 is an L-methionine binding site. K288 provides a ligand contact to L-methionine.

This sequence belongs to the AdoMet synthase family. In terms of assembly, homotetramer; dimer of dimers. The cofactor is Mg(2+). K(+) serves as cofactor.

Its subcellular location is the cytoplasm. It carries out the reaction L-methionine + ATP + H2O = S-adenosyl-L-methionine + phosphate + diphosphate. It participates in amino-acid biosynthesis; S-adenosyl-L-methionine biosynthesis; S-adenosyl-L-methionine from L-methionine: step 1/1. Functionally, catalyzes the formation of S-adenosylmethionine (AdoMet) from methionine and ATP. The overall synthetic reaction is composed of two sequential steps, AdoMet formation and the subsequent tripolyphosphate hydrolysis which occurs prior to release of AdoMet from the enzyme. The chain is S-adenosylmethionine synthase from Parasynechococcus marenigrum (strain WH8102).